Reading from the N-terminus, the 220-residue chain is MPPRPRFDRRAPVRELPNINERINYPQLRVVDADGTQLGVIDREKALEVAQERELDLVLVSEKADPPVCRIMDYGKYKFEQEKKAKEAKKKSHQTEVKEVKMRYKIDQHDYDVRIGQAQRFLKAGDKVKCTVIFRGREIQHTALAETLLRRMAKDLEEPAEIQQPPKREGRNMIMFLTPRKTPLVKKDDKEEPATRAVRTITAPPRPTSARLASKPAGNG.

The disordered stretch occupies residues 182–220; the sequence is TPLVKKDDKEEPATRAVRTITAPPRPTSARLASKPAGNG. Residues 185-194 are compositionally biased toward basic and acidic residues; sequence VKKDDKEEPA.

Belongs to the IF-3 family. As to quaternary structure, monomer.

It is found in the cytoplasm. IF-3 binds to the 30S ribosomal subunit and shifts the equilibrium between 70S ribosomes and their 50S and 30S subunits in favor of the free subunits, thus enhancing the availability of 30S subunits on which protein synthesis initiation begins. The polypeptide is Translation initiation factor IF-3 (Synechococcus sp. (strain WH7803)).